A 638-amino-acid polypeptide reads, in one-letter code: Polypeptide N-acetylgalactosaminyltransferase 15 (638 aa).

The Cytoplasmic portion of the chain corresponds to 1–12 (MLPRKRPRSGRS). Residues 13–35 (RLQFLLLFLTLGCVLMMVILLHP) form a helical; Signal-anchor for type II membrane protein membrane-spanning segment. Residues 36 to 638 (PPPTLHQAVT…FDQIHPVDER (603 aa)) lie on the Lumenal side of the membrane. The tract at residues 134-157 (KDWRTEEDGEESEEVLTPLGPDSD) is disordered. 5 disulfides stabilise this stretch: Cys181/Cys411, Cys402/Cys481, Cys516/Cys535, Cys561/Cys574, and Cys602/Cys619. The catalytic subdomain A stretch occupies residues 190 to 299 (LPTASVILCF…PGWLEPLLSR (110 aa)). Residues Asp231 and Arg260 each contribute to the substrate site. 3 residues coordinate Mn(2+): Asp283, His285, and His416. The catalytic subdomain B stretch occupies residues 357–419 (PVRSPVVPRE…PCSRVGHIYR (63 aa)). Residue Arg419 participates in substrate binding. Residues 503–630 (RFSGKLHNTG…GKTSQLWRFD (128 aa)) enclose the Ricin B-type lectin domain. Asn573 carries an N-linked (GlcNAc...) asparagine glycan.

It belongs to the glycosyltransferase 2 family. GalNAc-T subfamily. The cofactor is Mn(2+). In terms of tissue distribution, specifically expressed in testis.

It localises to the golgi apparatus membrane. The enzyme catalyses L-seryl-[protein] + UDP-N-acetyl-alpha-D-galactosamine = a 3-O-[N-acetyl-alpha-D-galactosaminyl]-L-seryl-[protein] + UDP + H(+). It catalyses the reaction L-threonyl-[protein] + UDP-N-acetyl-alpha-D-galactosamine = a 3-O-[N-acetyl-alpha-D-galactosaminyl]-L-threonyl-[protein] + UDP + H(+). It participates in protein modification; protein glycosylation. In terms of biological role, catalyzes the initial reaction in O-linked oligosaccharide biosynthesis, the transfer of an N-acetyl-D-galactosamine residue to a serine or threonine residue on the protein receptor. Although it displays a much weaker activity toward all substrates tested compared to GALNT2, it is able to transfer up to seven GalNAc residues to the Muc5AC peptide, suggesting that it can fill vicinal Thr/Ser residues in cooperation with other GALNT proteins. Prefers Muc1a as substrate. This chain is Polypeptide N-acetylgalactosaminyltransferase 15 (Galnt15), found in Mus musculus (Mouse).